We begin with the raw amino-acid sequence, 333 residues long: Ornithine carbamoyltransferase (333 aa).

Carbamoyl phosphate contacts are provided by residues 56–59, arginine 107, and 134–137; these read STRT and HPTQ. Residues asparagine 167, aspartate 231, and 235–236 each bind L-ornithine; that span reads SM. Carbamoyl phosphate-binding positions include 273–274 and arginine 318; that span reads CL.

Belongs to the aspartate/ornithine carbamoyltransferase superfamily. OTCase family.

The protein resides in the cytoplasm. The enzyme catalyses carbamoyl phosphate + L-ornithine = L-citrulline + phosphate + H(+). The protein operates within amino-acid degradation; L-arginine degradation via ADI pathway; carbamoyl phosphate from L-arginine: step 2/2. In terms of biological role, reversibly catalyzes the transfer of the carbamoyl group from carbamoyl phosphate (CP) to the N(epsilon) atom of ornithine (ORN) to produce L-citrulline. The sequence is that of Ornithine carbamoyltransferase from Clostridium botulinum (strain Kyoto / Type A2).